The primary structure comprises 304 residues: dTDP-4-dehydrorhamnose reductase (304 aa).

NADH contacts are provided by residues 16-18, 42-43, and 66-68; these read GML, DI, and AWT. Residues 17–18, 42–43, and 66–68 each bind NADPH; these read ML, DI, and AWT. Position 107-108 (107-108) interacts with dTDP-beta-L-rhamnose; the sequence is TD. 2 residues coordinate NADH: tyrosine 131 and lysine 135. The NADPH site is built by tyrosine 131 and lysine 135. Residue tyrosine 131 is the Proton donor/acceptor of the active site. Residue tryptophan 157 coordinates dTDP-beta-L-rhamnose.

The protein belongs to the dTDP-4-dehydrorhamnose reductase family. Homodimer. Mg(2+) serves as cofactor.

The enzyme catalyses dTDP-beta-L-rhamnose + NADP(+) = dTDP-4-dehydro-beta-L-rhamnose + NADPH + H(+). It participates in carbohydrate biosynthesis; dTDP-L-rhamnose biosynthesis. Its pathway is antibiotic biosynthesis; streptomycin biosynthesis. Functionally, involved in the biosynthesis of the streptose moiety of streptomycin. Catalyzes the reduction of dTDP-6-deoxy-L-lyxo-4-hexulose to yield dTDP-L-rhamnose. RmlD uses NADH and NADPH nearly equally well. The polypeptide is dTDP-4-dehydrorhamnose reductase (Streptomyces griseus).